Here is a 217-residue protein sequence, read N- to C-terminus: Protein dao-4 (217 aa).

An N-terminal signal peptide occupies residues 1–21 (MKIALYSILLITVCYLSSTDA).

Its subcellular location is the nucleus. The protein resides in the secreted. In terms of biological role, probably acts downstream of the Wnt signaling pathway. The sequence is that of Protein dao-4 from Caenorhabditis elegans.